We begin with the raw amino-acid sequence, 426 residues long: Glutamate-1-semialdehyde 2,1-aminomutase (426 aa).

Lys-268 is subject to N6-(pyridoxal phosphate)lysine.

This sequence belongs to the class-III pyridoxal-phosphate-dependent aminotransferase family. HemL subfamily. The cofactor is pyridoxal 5'-phosphate.

The protein resides in the cytoplasm. It catalyses the reaction (S)-4-amino-5-oxopentanoate = 5-aminolevulinate. It participates in porphyrin-containing compound metabolism; protoporphyrin-IX biosynthesis; 5-aminolevulinate from L-glutamyl-tRNA(Glu): step 2/2. The polypeptide is Glutamate-1-semialdehyde 2,1-aminomutase (Saccharolobus islandicus (strain M.16.27) (Sulfolobus islandicus)).